Here is a 360-residue protein sequence, read N- to C-terminus: Peptide chain release factor 1 (360 aa).

An N5-methylglutamine modification is found at Gln235.

Belongs to the prokaryotic/mitochondrial release factor family. In terms of processing, methylated by PrmC. Methylation increases the termination efficiency of RF1.

It localises to the cytoplasm. Peptide chain release factor 1 directs the termination of translation in response to the peptide chain termination codons UAG and UAA. The sequence is that of Peptide chain release factor 1 from Janthinobacterium sp. (strain Marseille) (Minibacterium massiliensis).